A 339-amino-acid chain; its full sequence is Glutamyl-tRNA reductase (339 aa).

Residues 50–53, Ser102, 107–109, and Gln113 each bind substrate; these read TCHR and ETE. The Nucleophile role is filled by Cys51. 181–186 provides a ligand contact to NADP(+); the sequence is GYSDIN.

The protein belongs to the glutamyl-tRNA reductase family. Homodimer.

The enzyme catalyses (S)-4-amino-5-oxopentanoate + tRNA(Glu) + NADP(+) = L-glutamyl-tRNA(Glu) + NADPH + H(+). It functions in the pathway porphyrin-containing compound metabolism; protoporphyrin-IX biosynthesis; 5-aminolevulinate from L-glutamyl-tRNA(Glu): step 1/2. Its function is as follows. Catalyzes the NADPH-dependent reduction of glutamyl-tRNA(Glu) to glutamate 1-semialdehyde (GSA). The polypeptide is Glutamyl-tRNA reductase (Chlamydia pneumoniae (Chlamydophila pneumoniae)).